We begin with the raw amino-acid sequence, 481 residues long: Beta-amyrin 16-beta-monooxygenase (481 aa).

The chain crosses the membrane as a helical span at residues 4–24; sequence LFIIISLVIVILTTIFILSNL. Cysteine 428 contributes to the heme binding site.

Belongs to the cytochrome P450 family. Heme serves as cofactor. As to expression, highly expressed in roots. Expressed at very low levels in leaves and petals.

Its subcellular location is the membrane. The catalysed reaction is beta-amyrin + reduced [NADPH--hemoprotein reductase] + O2 = maniladiol + oxidized [NADPH--hemoprotein reductase] + H2O + H(+). It carries out the reaction oleanolate + reduced [NADPH--hemoprotein reductase] + O2 = cochalate + oxidized [NADPH--hemoprotein reductase] + H2O + H(+). Functionally, involved in triterpenoid saponin biosynthesis in roots. Catalyzes the hydroxylation of beta-amyrin at the C-16 beta position to form maniladiol. Is also able to oxidize oleanolat to cochalate. Has weak activity catalyzing the three-step oxidation at C-28 of beta-amyrin to form oleanolate. This is Beta-amyrin 16-beta-monooxygenase from Platycodon grandiflorus (Balloon flower).